Reading from the N-terminus, the 673-residue chain is Pesticin receptor (673 aa).

Residues 1–22 (MKMTRLYPLALGGLLLPAIANA) form the signal peptide. Positions 30 to 37 (STLVVTAS) match the TonB box motif. Residues 41 to 155 (SRSASANNVS…QGGIINIVTQ (115 aa)) form the TBDR plug domain. The 513-residue stretch at 160–672 (TPRGYIEGGV…TVGINTRIDF (513 aa)) folds into the TBDR beta-barrel domain. The TonB C-terminal box signature appears at 657-673 (QVNMGRTVGINTRIDFF).

It belongs to the TonB-dependent receptor family.

The protein localises to the cell outer membrane. Its function is as follows. Receptor for the bacteriocin pesticin and for the siderophore yersiniabactin. The protein is Pesticin receptor (fyuA) of Yersinia pestis.